The chain runs to 244 residues: tRNA (guanine-N(7)-)-methyltransferase (244 aa).

Residues 1 to 20 (MTNPFDSAGSKAPPKPFTVS) form a disordered region. S-adenosyl-L-methionine-binding residues include Glu75, Glu100, Asp127, and Asp150. Residue Asp150 is part of the active site. Substrate is bound at residue Lys154. Residues 156 to 161 (RHNKRR) form an interaction with RNA region. Substrate-binding positions include Asp186 and 223-226 (THFE).

The protein belongs to the class I-like SAM-binding methyltransferase superfamily. TrmB family.

It carries out the reaction guanosine(46) in tRNA + S-adenosyl-L-methionine = N(7)-methylguanosine(46) in tRNA + S-adenosyl-L-homocysteine. Its pathway is tRNA modification; N(7)-methylguanine-tRNA biosynthesis. Its function is as follows. Catalyzes the formation of N(7)-methylguanine at position 46 (m7G46) in tRNA. This Stenotrophomonas maltophilia (strain K279a) protein is tRNA (guanine-N(7)-)-methyltransferase.